The sequence spans 651 residues: UvrABC system protein B (651 aa).

Positions 25–178 (RGISCGAKEQ…CQLQERLVEL (154 aa)) constitute a Helicase ATP-binding domain. An ATP-binding site is contributed by 38 to 45 (GVTGSGKT). Positions 91–114 (YYDYYQPEAYIPQSDVYIEKDALI) match the Beta-hairpin motif. Residues 427–591 (DGQIHDVMCE…IVPRTIQKPV (165 aa)) enclose the Helicase C-terminal domain. The tract at residues 593–615 (TSLSERVGSSRKKVSRDTNTDPA) is disordered. The region spanning 616–651 (NRDIVELQKEMLLCAENLDFERAVEIRNEIKRLTAP) is the UVR domain.

It belongs to the UvrB family. Forms a heterotetramer with UvrA during the search for lesions. Interacts with UvrC in an incision complex.

Its subcellular location is the cytoplasm. The UvrABC repair system catalyzes the recognition and processing of DNA lesions. A damage recognition complex composed of 2 UvrA and 2 UvrB subunits scans DNA for abnormalities. Upon binding of the UvrA(2)B(2) complex to a putative damaged site, the DNA wraps around one UvrB monomer. DNA wrap is dependent on ATP binding by UvrB and probably causes local melting of the DNA helix, facilitating insertion of UvrB beta-hairpin between the DNA strands. Then UvrB probes one DNA strand for the presence of a lesion. If a lesion is found the UvrA subunits dissociate and the UvrB-DNA preincision complex is formed. This complex is subsequently bound by UvrC and the second UvrB is released. If no lesion is found, the DNA wraps around the other UvrB subunit that will check the other stand for damage. This chain is UvrABC system protein B, found in Anaplasma marginale (strain Florida).